The chain runs to 290 residues: Lipoyl synthase (290 aa).

Residues Cys-34, Cys-39, Cys-45, Cys-60, Cys-64, Cys-67, and Ser-273 each coordinate [4Fe-4S] cluster. The 217-residue stretch at 46 to 262 (WNKRHATVMI…KYIAYSKGFL (217 aa)) folds into the Radical SAM core domain.

The protein belongs to the radical SAM superfamily. Lipoyl synthase family. The cofactor is [4Fe-4S] cluster.

Its subcellular location is the cytoplasm. It carries out the reaction [[Fe-S] cluster scaffold protein carrying a second [4Fe-4S](2+) cluster] + N(6)-octanoyl-L-lysyl-[protein] + 2 oxidized [2Fe-2S]-[ferredoxin] + 2 S-adenosyl-L-methionine + 4 H(+) = [[Fe-S] cluster scaffold protein] + N(6)-[(R)-dihydrolipoyl]-L-lysyl-[protein] + 4 Fe(3+) + 2 hydrogen sulfide + 2 5'-deoxyadenosine + 2 L-methionine + 2 reduced [2Fe-2S]-[ferredoxin]. The protein operates within protein modification; protein lipoylation via endogenous pathway; protein N(6)-(lipoyl)lysine from octanoyl-[acyl-carrier-protein]: step 2/2. Its function is as follows. Catalyzes the radical-mediated insertion of two sulfur atoms into the C-6 and C-8 positions of the octanoyl moiety bound to the lipoyl domains of lipoate-dependent enzymes, thereby converting the octanoylated domains into lipoylated derivatives. In Wolbachia pipientis subsp. Culex pipiens (strain wPip), this protein is Lipoyl synthase.